The primary structure comprises 616 residues: Auxin efflux carrier component 4 (616 aa).

Residues M1–L7 are Extracellular-facing. A helical membrane pass occupies residues Y8 to V28. At Q29–Q38 the chain is on the cytoplasmic side. A helical membrane pass occupies residues C39–I59. A (indol-3-yl)acetate-binding site is contributed by V51. Topologically, residues S60–R70 are extracellular. The chain crosses the membrane as a helical span at residues F71–N91. Topologically, residues L92–M101 are cytoplasmic. A helical transmembrane segment spans residues I102–I122. 2 residues coordinate (indol-3-yl)acetate: N112 and L114. Residues A123 to S131 lie on the Extracellular side of the membrane. Residues L132–F152 form a helical membrane-spanning segment. Y145 serves as a coordination point for (indol-3-yl)acetate. At E153–S476 the chain is on the cytoplasmic side. Residues S223, S240, and S280 each carry the phosphoserine modification. The interval A302–H343 is disordered. A compositionally biased stretch (polar residues) spans E312 to L334. A phosphoserine mark is found at S358 and S395. The segment at D390–E411 is disordered. Residues R398–S409 show a composition bias toward gly residues. The helical transmembrane segment at L477–L497 threads the bilayer. The Extracellular segment spans residues Q498 to S500. The helical transmembrane segment at I501–A521 threads the bilayer. The Cytoplasmic segment spans residues L522 to T535. A helical transmembrane segment spans residues F536 to I556. Residues G557 to D561 lie on the Extracellular side of the membrane. The helical transmembrane segment at L562 to A582 threads the bilayer. The (indol-3-yl)acetate site is built by I576 and V577. The Cytoplasmic segment spans residues K583–G595. A helical transmembrane segment spans residues V596–L616.

It belongs to the auxin efflux carrier (TC 2.A.69.1) family. Homodimer. As to expression, expressed in the quiescent center precursors and surrounding cells. Present in columella cells of primary roots. Detected in pollen.

It localises to the cell membrane. Its function is as follows. Acts as a component of the auxin efflux carrier. Plays a role in generating a sink for auxin into columella cells. Maintains the endogenous auxin gradient, which is essential for correct root patterning. Involved in EXO70A3-regulated gravitropic responses in columella cells and in root system architecture (RSA). Together with PIN3 and PIN7, involved in the connective auxin transport (CAT) that ensures communication across the shoot system, and modulates strigolactone-mediated shoot branching control. The abcb19 pin3 pin4 pin7 quadruple mutant exhibits an additive phenotype on strigolactone-mediated bud outgrowth responses and shoot branching control. The polypeptide is Auxin efflux carrier component 4 (Arabidopsis thaliana (Mouse-ear cress)).